Reading from the N-terminus, the 471-residue chain is Putative multidrug resistance protein MdtD (471 aa).

Over 1 to 11 the chain is Periplasmic; that stretch reads MTDLPDSTRWQ. A helical transmembrane segment spans residues 12 to 32; that stretch reads LWIVAFGFFMQSLDTTIVNTA. The Cytoplasmic portion of the chain corresponds to 33–48; the sequence is LPSMAQSLGESPLHMH. The helical transmembrane segment at 49 to 69 threads the bilayer; the sequence is MVIVSYVLTVAVMLPASGWLA. Over 70–76 the chain is Periplasmic; sequence DKVGVRN. A helical transmembrane segment spans residues 77–97; it reads IFFTAIVLFTLGSLFCALSGT. The Cytoplasmic portion of the chain corresponds to 98–101; sequence LNEL. Residues 102-124 traverse the membrane as a helical segment; that stretch reads LLARALQGVGGAMMVPVGRLTVM. The Periplasmic portion of the chain corresponds to 125–137; that stretch reads KIVPREQYMAAMT. A helical membrane pass occupies residues 138-158; sequence FVTLPGQVGPLLGPALGGLLV. At 159–164 the chain is on the cytoplasmic side; the sequence is EYASWH. Residues 165-185 traverse the membrane as a helical segment; that stretch reads WIFLINIPVGIIGAIATLMLM. Residues 186-196 are Periplasmic-facing; that stretch reads PNYTMQTRRFD. Residues 197–217 form a helical membrane-spanning segment; the sequence is LSGFLLLAVGMAVLTLALDGS. Over 218–224 the chain is Cytoplasmic; sequence KGTGLSP. Residues 225 to 245 traverse the membrane as a helical segment; that stretch reads LAIAGLVAVGVVALVLYLLHA. Residues 246-262 are Periplasmic-facing; the sequence is RNNNRALFSLKLFRTRT. Residues 263-283 traverse the membrane as a helical segment; that stretch reads FSLGLAGSFAGRIGSGMLPFM. Residues 284–285 are Cytoplasmic-facing; sequence TP. A helical transmembrane segment spans residues 286–306; the sequence is VFLQIGLGFSPFHAGLMMIPM. The Periplasmic segment spans residues 307–341; sequence VLGSMGMKRIVVQVVNRFGYRRVLVATTLGLSLVT. A helical transmembrane segment spans residues 342–362; it reads LLFMTTALLGWYYVLPFVLFL. Over 363–395 the chain is Cytoplasmic; it reads QGMVNSTRFSSMNTLTLKDLPDNLASSGNSLLS. The helical transmembrane segment at 396–416 threads the bilayer; sequence MIMQLSMSIGVTIAGLLLGLF. Residues 417–430 are Periplasmic-facing; sequence GSQHVSIDSGTTQT. The chain crosses the membrane as a helical span at residues 431–451; sequence VFMYTWLSMALIIALPAFIFA. Residues 452–471 are Cytoplasmic-facing; sequence RVPNDTHQNVAISRRKRSAQ.

It belongs to the major facilitator superfamily. TCR/Tet family.

The protein localises to the cell inner membrane. The polypeptide is Putative multidrug resistance protein MdtD (Escherichia coli (strain 55989 / EAEC)).